Reading from the N-terminus, the 687-residue chain is CWF19-like protein 2 homolog (687 aa).

The stretch at 6–51 (FESGREKDKARQELREAREAMLQQAKERAELRGQRERQKELRGEAD) forms a coiled coil. Residues 24 to 50 (EAMLQQAKERAELRGQRERQKELRGEA) are compositionally biased toward basic and acidic residues. The disordered stretch occupies residues 24–281 (EAMLQQAKER…PKSRPSCLTD (258 aa)). The segment covering 66-92 (KKSKKNVSKHKSRSKSKSSKKSRKHRN) has biased composition (basic residues). Over residues 93–107 (SSSSSESSTSSSSSF) the composition is skewed to low complexity. Residues 108–131 (SEDEKERKRRKKKSKRSRKESASE) adopt a coiled-coil conformation. A compositionally biased stretch (basic residues) spans 114 to 125 (RKRRKKKSKRSR). Phosphoserine is present on residues serine 128 and serine 130. Basic and acidic residues-rich tracts occupy residues 146–157 (VTKKEPPQRDDW) and 168–180 (FSRE…KPNE). Residues 290–325 (KAIKAELKGKKELAAELNQQLEAARKERAEFIASGE) are a coiled coil. The tract at residues 355–383 (VRPLVQSGDPNESYGGRMGPKRGSKKVDT) is disordered. Residues 444-475 (KQISASDAEKREMQSAIREHEKLVATLDNCER) adopt a coiled-coil conformation.

The protein belongs to the CWF19 family.

This chain is CWF19-like protein 2 homolog, found in Drosophila melanogaster (Fruit fly).